The chain runs to 245 residues: Protein crossbronx (245 aa).

The UBC core domain maps to 20 to 177; it reads QQEYKILAEY…VQESIVESKS (158 aa).

It belongs to the ubiquitin-conjugating enzyme family. FTS subfamily.

In Drosophila virilis (Fruit fly), this protein is Protein crossbronx (cbx).